A 201-amino-acid polypeptide reads, in one-letter code: Large ribosomal subunit protein uL4 (201 aa).

A disordered region spans residues 43 to 73 (TRAQKTRSEVSGGGAKPWRQKGTGRARAGTT).

It belongs to the universal ribosomal protein uL4 family. In terms of assembly, part of the 50S ribosomal subunit.

Its function is as follows. One of the primary rRNA binding proteins, this protein initially binds near the 5'-end of the 23S rRNA. It is important during the early stages of 50S assembly. It makes multiple contacts with different domains of the 23S rRNA in the assembled 50S subunit and ribosome. Functionally, forms part of the polypeptide exit tunnel. The chain is Large ribosomal subunit protein uL4 from Colwellia psychrerythraea (strain 34H / ATCC BAA-681) (Vibrio psychroerythus).